The sequence spans 165 residues: Large ribosomal subunit protein uL11 (165 aa).

A Phosphoserine modification is found at Ser38. Lys40 is covalently cross-linked (Glycyl lysine isopeptide (Lys-Gly) (interchain with G-Cter in SUMO2)). Lys48 participates in a covalent cross-link: Glycyl lysine isopeptide (Lys-Gly) (interchain with G-Cter in ubiquitin). Lys54 is subject to N6-acetyllysine. Residue Lys83 forms a Glycyl lysine isopeptide (Lys-Gly) (interchain with G-Cter in ubiquitin) linkage. Ser165 is subject to Phosphoserine.

This sequence belongs to the universal ribosomal protein uL11 family. As to quaternary structure, component of the large ribosomal subunit. Mature ribosomes consist of a small (40S) and a large (60S) subunit. The 40S subunit contains about 33 different proteins and 1 molecule of RNA (18S). The 60S subunit contains about 49 different proteins and 3 molecules of RNA (28S, 5.8S and 5S). Ubiquitinated at Lys-48 and Lys-83 by RNF14 and RNF25 in response to ribosome collisions (ribosome stalling).

It is found in the cytoplasm. Component of the large ribosomal subunit. The ribosome is a large ribonucleoprotein complex responsible for the synthesis of proteins in the cell. Binds directly to 26S ribosomal RNA. The protein is Large ribosomal subunit protein uL11 (RPL12) of Chinchilla lanigera (Long-tailed chinchilla).